The chain runs to 498 residues: Fascin-3 (498 aa).

Belongs to the fascin family. Expressed in testis.

It is found in the cytoplasm. The protein localises to the cytoskeleton. Acts as an actin bundling protein. The chain is Fascin-3 (Fscn3) from Mus musculus (Mouse).